We begin with the raw amino-acid sequence, 296 residues long: GTP cyclohydrolase FolE2 (296 aa).

This sequence belongs to the GTP cyclohydrolase IV family.

The catalysed reaction is GTP + H2O = 7,8-dihydroneopterin 3'-triphosphate + formate + H(+). It participates in cofactor biosynthesis; 7,8-dihydroneopterin triphosphate biosynthesis; 7,8-dihydroneopterin triphosphate from GTP: step 1/1. Its function is as follows. Converts GTP to 7,8-dihydroneopterin triphosphate. This chain is GTP cyclohydrolase FolE2, found in Delftia acidovorans (strain DSM 14801 / SPH-1).